We begin with the raw amino-acid sequence, 420 residues long: Hemojuvelin (420 aa).

Residues 1-32 (MGQSPSPRSPHGSPPTLSTLTLLLLLCGQAHS) form the signal peptide. A Phosphotyrosine modification is found at Y43. A glycan (N-linked (GlcNAc...) asparagine) is linked at N111. Positions 113–135 (SRQGPTAPPPARGPALPGAGPAP) are disordered. Over residues 125 to 134 (GPALPGAGPA) the composition is skewed to low complexity. 2 disulfides stabilise this stretch: C141–C223 and C160–C310. N-linked (GlcNAc...) asparagine glycosylation is found at N206 and N365. Residue D393 is the site of GPI-anchor amidated aspartate attachment. The propeptide at 394–420 (AGPPLSPAICLVPLLSALFVLWLCFSK) is removed in mature form.

This sequence belongs to the repulsive guidance molecule (RGM) family. In terms of assembly, interacts with BMP2 and BMP4. Interacts with BMP6. Interacts with BMPR1B. Interacts with TMPRSS6. Autocatalytically cleaved at low pH; the two chains remain linked via two disulfide bonds. Also proteolytically processed by TMPRSS6, several fragments being released in the extracellular space; regulates HJV activity in BMP signaling and thefore iron homeostasis. Muscle cell lineage.

The protein resides in the cell membrane. Its function is as follows. Acts as a bone morphogenetic protein (BMP) coreceptor. Through enhancement of BMP signaling regulates hepcidin (HAMP) expression and regulates iron homeostasis. The sequence is that of Hemojuvelin from Mus musculus (Mouse).